The chain runs to 182 residues: MTIPQSPTTEDIVAALRNADAVQYGEFELSHGGTSAYYIDKYLFETDPKCLQIIASAFADRINETTLAGVALGAVPLVAVTSTVAGQPYVVVRKKAKKYGTGNRIEGRLNEDEEVVVLEDIATTGTSAVEAVNALRDVGATVERVFVVVDRQEGAREQLESNNVEMEALVTATDLLVDDENV.

5-phospho-alpha-D-ribose 1-diphosphate is bound by residues Arg93, Lys94, Lys97, and 119-127 (EDIATTGTS). Thr123 and Arg151 together coordinate orotate.

Belongs to the purine/pyrimidine phosphoribosyltransferase family. PyrE subfamily. In terms of assembly, homodimer. Requires Mg(2+) as cofactor.

The enzyme catalyses orotidine 5'-phosphate + diphosphate = orotate + 5-phospho-alpha-D-ribose 1-diphosphate. It participates in pyrimidine metabolism; UMP biosynthesis via de novo pathway; UMP from orotate: step 1/2. Its function is as follows. Catalyzes the transfer of a ribosyl phosphate group from 5-phosphoribose 1-diphosphate to orotate, leading to the formation of orotidine monophosphate (OMP). The sequence is that of Orotate phosphoribosyltransferase from Haloquadratum walsbyi (strain DSM 16790 / HBSQ001).